The following is a 171-amino-acid chain: Ribosome maturation factor RimM (171 aa).

Residues 97-170 form the PRC barrel domain; it reads EGEYYYHEII…LVTIHVMEGL (74 aa).

This sequence belongs to the RimM family. Binds ribosomal protein uS19.

It localises to the cytoplasm. In terms of biological role, an accessory protein needed during the final step in the assembly of 30S ribosomal subunit, possibly for assembly of the head region. Essential for efficient processing of 16S rRNA. May be needed both before and after RbfA during the maturation of 16S rRNA. It has affinity for free ribosomal 30S subunits but not for 70S ribosomes. This is Ribosome maturation factor RimM from Bacillus cereus (strain ATCC 14579 / DSM 31 / CCUG 7414 / JCM 2152 / NBRC 15305 / NCIMB 9373 / NCTC 2599 / NRRL B-3711).